The following is a 198-amino-acid chain: dITP/XTP pyrophosphatase (198 aa).

Residue 11–16 (THNPGK) coordinates substrate. Positions 44 and 73 each coordinate Mg(2+). D73 (proton acceptor) is an active-site residue. Residues S74, 156-159 (FGYD), K179, and 184-185 (HR) each bind substrate.

This sequence belongs to the HAM1 NTPase family. Homodimer. Mg(2+) is required as a cofactor.

The enzyme catalyses XTP + H2O = XMP + diphosphate + H(+). It catalyses the reaction dITP + H2O = dIMP + diphosphate + H(+). The catalysed reaction is ITP + H2O = IMP + diphosphate + H(+). Pyrophosphatase that catalyzes the hydrolysis of nucleoside triphosphates to their monophosphate derivatives, with a high preference for the non-canonical purine nucleotides XTP (xanthosine triphosphate), dITP (deoxyinosine triphosphate) and ITP. Seems to function as a house-cleaning enzyme that removes non-canonical purine nucleotides from the nucleotide pool, thus preventing their incorporation into DNA/RNA and avoiding chromosomal lesions. This is dITP/XTP pyrophosphatase (ysnA) from Bacillus subtilis (strain 168).